Reading from the N-terminus, the 315-residue chain is Ribosomal RNA small subunit methyltransferase H (315 aa).

S-adenosyl-L-methionine is bound by residues 37-39 (GGH), Asp57, Leu91, Asp105, and Gln112.

It belongs to the methyltransferase superfamily. RsmH family.

It is found in the cytoplasm. The catalysed reaction is cytidine(1402) in 16S rRNA + S-adenosyl-L-methionine = N(4)-methylcytidine(1402) in 16S rRNA + S-adenosyl-L-homocysteine + H(+). Its function is as follows. Specifically methylates the N4 position of cytidine in position 1402 (C1402) of 16S rRNA. The chain is Ribosomal RNA small subunit methyltransferase H from Syntrophus aciditrophicus (strain SB).